The following is a 183-amino-acid chain: Large ribosomal subunit protein uL18 (183 aa).

It belongs to the universal ribosomal protein uL18 family. As to quaternary structure, part of the 50S ribosomal subunit. Contacts the 5S and 23S rRNAs.

In terms of biological role, this is one of the proteins that bind and probably mediate the attachment of the 5S RNA into the large ribosomal subunit, where it forms part of the central protuberance. In Halobacterium salinarum (strain ATCC 29341 / DSM 671 / R1), this protein is Large ribosomal subunit protein uL18.